Consider the following 158-residue polypeptide: Endoribonuclease YbeY (158 aa).

Residues His121, His125, and His131 each coordinate Zn(2+).

This sequence belongs to the endoribonuclease YbeY family. Requires Zn(2+) as cofactor.

It is found in the cytoplasm. Functionally, single strand-specific metallo-endoribonuclease involved in late-stage 70S ribosome quality control and in maturation of the 3' terminus of the 16S rRNA. The chain is Endoribonuclease YbeY from Exiguobacterium sibiricum (strain DSM 17290 / CCUG 55495 / CIP 109462 / JCM 13490 / 255-15).